The sequence spans 320 residues: GRAM domain-containing protein 2A (320 aa).

The disordered stretch occupies residues 33–56 (TEKPGKVQEPPDDGSLHWSEGSKG). The 68-residue stretch at 74–141 (QQYHKLFKDI…VSVQLIKKHK (68 aa)) folds into the GRAM domain. A helical membrane pass occupies residues 278–298 (LLKVIFVMICFLVLSSSYLAF).

Phosphorylated.

The protein localises to the endoplasmic reticulum membrane. It is found in the cell membrane. In terms of biological role, participates in the organization ofendoplasmic reticulum-plasma membrane contact sites (EPCS) with pleiotropic functions including STIM1 recruitment and calcium homeostasis. Constitutive tether that co-localize with ESYT2/3 tethers at endoplasmic reticulum-plasma membrane contact sites in a phosphatidylinositol lipid-dependent manner. Pre-marks the subset of phosphtidylinositol 4,5-biphosphate (PI(4,5)P2)-enriched EPCS destined for the store operated calcium entry pathway (SOCE). This Mus musculus (Mouse) protein is GRAM domain-containing protein 2A.